The following is a 196-amino-acid chain: DnaA initiator-associating protein DiaA (196 aa).

The SIS domain maps to 34 to 196 (LVHSLLNGNK…DNTLFPHQDD (163 aa)).

It belongs to the SIS family. DiaA subfamily. As to quaternary structure, homotetramer; dimer of dimers.

Required for the timely initiation of chromosomal replication via direct interactions with the DnaA initiator protein. This is DnaA initiator-associating protein DiaA from Salmonella enteritidis PT4 (strain P125109).